The chain runs to 104 residues: UPF0147 protein MK1586 (104 aa).

Belongs to the UPF0147 family.

The chain is UPF0147 protein MK1586 from Methanopyrus kandleri (strain AV19 / DSM 6324 / JCM 9639 / NBRC 100938).